We begin with the raw amino-acid sequence, 209 residues long: GTP cyclohydrolase 1 (209 aa).

Positions 100, 103, and 171 each coordinate Zn(2+).

This sequence belongs to the GTP cyclohydrolase I family. As to quaternary structure, toroid-shaped homodecamer, composed of two pentamers of five dimers.

It carries out the reaction GTP + H2O = 7,8-dihydroneopterin 3'-triphosphate + formate + H(+). Its pathway is cofactor biosynthesis; 7,8-dihydroneopterin triphosphate biosynthesis; 7,8-dihydroneopterin triphosphate from GTP: step 1/1. The protein is GTP cyclohydrolase 1 of Ralstonia nicotianae (strain ATCC BAA-1114 / GMI1000) (Ralstonia solanacearum).